Reading from the N-terminus, the 205-residue chain is Protein TON_1965 (205 aa).

One can recognise an AMMECR1 domain in the interval 7–201; the sequence is EWGEFLVRLA…EEYPKGPVKR (195 aa).

The protein is Protein TON_1965 of Thermococcus onnurineus (strain NA1).